Consider the following 283-residue polypeptide: ATP synthase gamma chain (283 aa).

It belongs to the ATPase gamma chain family. In terms of assembly, F-type ATPases have 2 components, CF(1) - the catalytic core - and CF(0) - the membrane proton channel. CF(1) has five subunits: alpha(3), beta(3), gamma(1), delta(1), epsilon(1). CF(0) has three main subunits: a, b and c.

The protein localises to the cell membrane. Its function is as follows. Produces ATP from ADP in the presence of a proton gradient across the membrane. The gamma chain is believed to be important in regulating ATPase activity and the flow of protons through the CF(0) complex. The polypeptide is ATP synthase gamma chain (Clostridium kluyveri (strain NBRC 12016)).